The sequence spans 213 residues: Pyrrolidone-carboxylate peptidase (213 aa).

Catalysis depends on residues Glu78, Cys141, and His165.

Belongs to the peptidase C15 family. In terms of assembly, homotetramer.

It is found in the cytoplasm. The enzyme catalyses Release of an N-terminal pyroglutamyl group from a polypeptide, the second amino acid generally not being Pro.. Its function is as follows. Removes 5-oxoproline from various penultimate amino acid residues except L-proline. The sequence is that of Pyrrolidone-carboxylate peptidase from Staphylococcus saprophyticus subsp. saprophyticus (strain ATCC 15305 / DSM 20229 / NCIMB 8711 / NCTC 7292 / S-41).